Reading from the N-terminus, the 319-residue chain is Coproporphyrin III ferrochelatase (319 aa).

The Fe(2+) site is built by H193 and E274.

This sequence belongs to the ferrochelatase family.

It is found in the cytoplasm. It carries out the reaction Fe-coproporphyrin III + 2 H(+) = coproporphyrin III + Fe(2+). The protein operates within porphyrin-containing compound metabolism; protoheme biosynthesis. Involved in coproporphyrin-dependent heme b biosynthesis. Catalyzes the insertion of ferrous iron into coproporphyrin III to form Fe-coproporphyrin III. The protein is Coproporphyrin III ferrochelatase of Streptococcus mutans serotype c (strain ATCC 700610 / UA159).